The chain runs to 557 residues: Transmembrane protein 209 (557 aa).

Residues 28-48 (VVLAWGLLNVSLAGMIYTEMT) form a helical membrane-spanning segment. Asn57 carries N-linked (GlcNAc...) asparagine glycosylation. A helical transmembrane segment spans residues 60 to 80 (YWPLWYIELALASLFSLNALF). 2 disordered regions span residues 108–156 (PYSS…KFSP) and 194–232 (YSSS…TDKE). Polar residues predominate over residues 125-140 (VPASTPSPSMQGQNVL). Composition is skewed to low complexity over residues 141–156 (SYSP…KFSP), 194–205 (YSSSPGSSQYPS), and 219–228 (RSSPSTYSSP). Residues Asn273 and Asn343 are each glycosylated (N-linked (GlcNAc...) asparagine).

The protein resides in the membrane. Its subcellular location is the nucleus envelope. The protein localises to the golgi apparatus. It is found in the cytoplasm. The protein is Transmembrane protein 209 (tmem209) of Xenopus tropicalis (Western clawed frog).